The following is an 878-amino-acid chain: Alanine--tRNA ligase (878 aa).

Zn(2+) is bound by residues His567, His571, Cys669, and His673.

The protein belongs to the class-II aminoacyl-tRNA synthetase family. The cofactor is Zn(2+).

The protein localises to the cytoplasm. The catalysed reaction is tRNA(Ala) + L-alanine + ATP = L-alanyl-tRNA(Ala) + AMP + diphosphate. Its function is as follows. Catalyzes the attachment of alanine to tRNA(Ala) in a two-step reaction: alanine is first activated by ATP to form Ala-AMP and then transferred to the acceptor end of tRNA(Ala). Also edits incorrectly charged Ser-tRNA(Ala) and Gly-tRNA(Ala) via its editing domain. The chain is Alanine--tRNA ligase from Rickettsia canadensis (strain McKiel).